The chain runs to 186 residues: Tumor necrosis factor, alpha-induced protein 8-like protein 2 B (186 aa).

This sequence belongs to the TNFAIP8 family. TNFAIP8L2 subfamily.

Functionally, acts as a negative regulator of innate and adaptive immunity by maintaining immune homeostasis. Negative regulator of Toll-like receptor and T-cell receptor function. Prevents hyperresponsiveness of the immune system and maintains immune homeostasis. Inhibits jun/ap1 and NF-kappa-B activation. Promotes Fas-induced apoptosis. This chain is Tumor necrosis factor, alpha-induced protein 8-like protein 2 B (tnfaip8l2b), found in Danio rerio (Zebrafish).